Consider the following 286-residue polypeptide: Tyrosine recombinase Tlet_1492 (286 aa).

A Core-binding (CB) domain is found at 1 to 86; the sequence is MERILQNFSD…SLRSFFNYLQ (86 aa). The 174-residue stretch at 107–280 folds into the Tyr recombinase domain; the sequence is RIPDFLLPSE…VDQEKFDAIN (174 aa). Active-site residues include arginine 143, lysine 168, histidine 232, arginine 235, and histidine 258. Catalysis depends on tyrosine 267, which acts as the O-(3'-phospho-DNA)-tyrosine intermediate.

Belongs to the 'phage' integrase family.

The protein localises to the cytoplasm. In terms of biological role, site-specific tyrosine recombinase, which acts by catalyzing the cutting and rejoining of the recombining DNA molecules. In Pseudothermotoga lettingae (strain ATCC BAA-301 / DSM 14385 / NBRC 107922 / TMO) (Thermotoga lettingae), this protein is Tyrosine recombinase Tlet_1492.